The sequence spans 103 residues: Small ribosomal subunit protein uS10 (103 aa).

The protein belongs to the universal ribosomal protein uS10 family. In terms of assembly, part of the 30S ribosomal subunit.

In terms of biological role, involved in the binding of tRNA to the ribosomes. This chain is Small ribosomal subunit protein uS10, found in Hydrogenovibrio crunogenus (strain DSM 25203 / XCL-2) (Thiomicrospira crunogena).